Here is a 204-residue protein sequence, read N- to C-terminus: Large ribosomal subunit protein eL15 (204 aa).

The protein belongs to the eukaryotic ribosomal protein eL15 family. Component of the large ribosomal subunit.

The protein localises to the cytoplasm. Functionally, component of the large ribosomal subunit. The ribosome is a large ribonucleoprotein complex responsible for the synthesis of proteins in the cell. This is Large ribosomal subunit protein eL15 (rpl15) from Cyprinus carpio (Common carp).